A 374-amino-acid polypeptide reads, in one-letter code: Alanine racemase (374 aa).

Residue lysine 35 is the Proton acceptor; specific for D-alanine of the active site. Lysine 35 carries the N6-(pyridoxal phosphate)lysine modification. Residue arginine 133 participates in substrate binding. Tyrosine 261 serves as the catalytic Proton acceptor; specific for L-alanine. A substrate-binding site is contributed by methionine 315.

Belongs to the alanine racemase family. Pyridoxal 5'-phosphate is required as a cofactor.

It carries out the reaction L-alanine = D-alanine. It participates in amino-acid biosynthesis; D-alanine biosynthesis; D-alanine from L-alanine: step 1/1. In terms of biological role, catalyzes the interconversion of L-alanine and D-alanine. May also act on other amino acids. The sequence is that of Alanine racemase (alr) from Psychrobacter sp. (strain PRwf-1).